Here is a 295-residue protein sequence, read N- to C-terminus: Ribosomal protein L11 methyltransferase (295 aa).

S-adenosyl-L-methionine contacts are provided by Thr-150, Gly-171, Asp-193, and Asn-232.

Belongs to the methyltransferase superfamily. PrmA family.

It localises to the cytoplasm. The enzyme catalyses L-lysyl-[protein] + 3 S-adenosyl-L-methionine = N(6),N(6),N(6)-trimethyl-L-lysyl-[protein] + 3 S-adenosyl-L-homocysteine + 3 H(+). Its function is as follows. Methylates ribosomal protein L11. This is Ribosomal protein L11 methyltransferase from Neisseria meningitidis serogroup B (strain ATCC BAA-335 / MC58).